The primary structure comprises 143 residues: Large ribosomal subunit protein uL11 (143 aa).

The protein belongs to the universal ribosomal protein uL11 family. In terms of assembly, part of the ribosomal stalk of the 50S ribosomal subunit. Interacts with L10 and the large rRNA to form the base of the stalk. L10 forms an elongated spine to which L12 dimers bind in a sequential fashion forming a multimeric L10(L12)X complex. Post-translationally, one or more lysine residues are methylated.

Its function is as follows. Forms part of the ribosomal stalk which helps the ribosome interact with GTP-bound translation factors. This is Large ribosomal subunit protein uL11 from Paraburkholderia xenovorans (strain LB400).